The chain runs to 399 residues: Oligoribonuclease NrnB (399 aa).

The cofactor is Mn(2+). Co(2+) is required as a cofactor. It depends on Mg(2+) as a cofactor.

The protein resides in the cytoplasm. Functionally, degrades RNA oligonucleotides with a length of 5 nucleotides in a 3'- to 5'-direction. Less active on shorter RNA oligonucleotides and on those with a length of 24 nucleotides. Prefers RNA oligonucleotides containing adenines rather than cytosines. The polypeptide is Oligoribonuclease NrnB (nrnB) (Bacillus subtilis (strain 168)).